The primary structure comprises 513 residues: MAVSPTTMAAVRASGAVPNAEFLLSAEGVRKEFPGVVALDDVQFRLKRASVHALMGENGAGKSTLMKILAGIYTPDKGDIRLKGVEIQLKSPLDALENGIAMIHQELNLMPFMTVAENIWIRREPKNRFGFIDHGVMHSMTEELFARLNIDIDPDIEVRHLSVANRQMVEIAKAVSYNSDVLIMDEPTSALTEREVEHLFRIIRDLRSQGIGIVYITHKMNELFEIADEFSVFRDGRYIGTHASTDVTRDDIIRMMVGREITQMFPKEEVPIGEIVLSVKDLCLKGVFRNVSFEVRAGEILGVAGLVGSGRSNVAETLFGVTPPSSGTVELFGKPVTISSPTEAIRHQMAFLTEDRKDTGCLLILDILENMQIAVLQDKFVKGGFVQQGALEATCEDMAKRLRVKTPNLYERVENLSGGNQQKVLIGRWLLTHPKILILDEPTRGIDVGAKAEIHRLVTEMARNGVAVIMISSEMPEVLGMSDRIMVMHEGLVTGFLNRDEATQIKVMELAAR.

ABC transporter domains lie at 24–260 (LSAE…VGRE) and 270–510 (VPIG…VMEL). 56 to 63 (GENGAGKS) lines the ATP pocket.

This sequence belongs to the ABC transporter superfamily. Carbohydrate importer 2 (CUT2) (TC 3.A.1.2) family.

The protein resides in the cell inner membrane. The catalysed reaction is D-ribose(out) + ATP + H2O = D-ribose(in) + ADP + phosphate + H(+). It catalyses the reaction D-galactose(out) + ATP + H2O = D-galactose(in) + ADP + phosphate + H(+). In terms of biological role, part of an ABC transporter complex involved in carbohydrate import. Could be involved in ribose, galactose and/or methyl galactoside import. Responsible for energy coupling to the transport system. The chain is Putative ribose/galactose/methyl galactoside import ATP-binding protein 2 from Rhizobium etli (strain ATCC 51251 / DSM 11541 / JCM 21823 / NBRC 15573 / CFN 42).